The following is a 326-amino-acid chain: tRNA dimethylallyltransferase (326 aa).

10–17 (GPTGTGKT) is an ATP binding site. A substrate-binding site is contributed by 12-17 (TGTGKT). Residues 35-38 (DSMQ) are interaction with substrate tRNA.

It belongs to the IPP transferase family. As to quaternary structure, monomer. Mg(2+) is required as a cofactor.

The catalysed reaction is adenosine(37) in tRNA + dimethylallyl diphosphate = N(6)-dimethylallyladenosine(37) in tRNA + diphosphate. Catalyzes the transfer of a dimethylallyl group onto the adenine at position 37 in tRNAs that read codons beginning with uridine, leading to the formation of N6-(dimethylallyl)adenosine (i(6)A). This Dictyoglomus turgidum (strain DSM 6724 / Z-1310) protein is tRNA dimethylallyltransferase.